A 141-amino-acid polypeptide reads, in one-letter code: Nucleoside diphosphate kinase (141 aa).

The ATP site is built by Lys11, Phe59, Arg87, Thr93, Arg104, and Asn114. Catalysis depends on His117, which acts as the Pros-phosphohistidine intermediate.

It belongs to the NDK family. As to quaternary structure, homotetramer. The cofactor is Mg(2+).

Its subcellular location is the cytoplasm. The catalysed reaction is a 2'-deoxyribonucleoside 5'-diphosphate + ATP = a 2'-deoxyribonucleoside 5'-triphosphate + ADP. It carries out the reaction a ribonucleoside 5'-diphosphate + ATP = a ribonucleoside 5'-triphosphate + ADP. Major role in the synthesis of nucleoside triphosphates other than ATP. The ATP gamma phosphate is transferred to the NDP beta phosphate via a ping-pong mechanism, using a phosphorylated active-site intermediate. The sequence is that of Nucleoside diphosphate kinase from Laribacter hongkongensis (strain HLHK9).